The following is a 736-amino-acid chain: Elongation factor 2 (736 aa).

Residues 18–234 (TRVRNIGIIA…VIDAYTASDK (217 aa)) enclose the tr-type G domain. Residues 27–34 (AHVDHGKT), 93–97 (DTPGH), and 147–150 (NKVD) contribute to the GTP site. H603 carries the diphthamide modification.

This sequence belongs to the TRAFAC class translation factor GTPase superfamily. Classic translation factor GTPase family. EF-G/EF-2 subfamily.

The protein localises to the cytoplasm. Catalyzes the GTP-dependent ribosomal translocation step during translation elongation. During this step, the ribosome changes from the pre-translocational (PRE) to the post-translocational (POST) state as the newly formed A-site-bound peptidyl-tRNA and P-site-bound deacylated tRNA move to the P and E sites, respectively. Catalyzes the coordinated movement of the two tRNA molecules, the mRNA and conformational changes in the ribosome. This Saccharolobus solfataricus (strain ATCC 35092 / DSM 1617 / JCM 11322 / P2) (Sulfolobus solfataricus) protein is Elongation factor 2 (fusA).